Consider the following 622-residue polypeptide: uncharacterized protein (622 aa).

An N-terminal signal peptide occupies residues 1–20 (MKIKAVAIFLSLLMIISLFS).

This is an uncharacterized protein from Methanocaldococcus jannaschii (strain ATCC 43067 / DSM 2661 / JAL-1 / JCM 10045 / NBRC 100440) (Methanococcus jannaschii).